A 209-amino-acid chain; its full sequence is Max dimerization protein 4 (209 aa).

The tract at residues L6 to A23 is interaction with SIN3A and SIN3B. Residues N53–L105 enclose the bHLH domain. Residues R140–S209 form a disordered region. Positions D153–G163 are enriched in acidic residues. Positions H199–S209 are enriched in basic residues.

In terms of assembly, efficient DNA binding requires dimerization with another bHLH protein. Binds DNA as a heterodimer with MAX. Interacts with SIN3A AND SIN3B. Interacts with RNF17.

Its subcellular location is the nucleus. Functionally, transcriptional repressor. Binds with MAX to form a sequence-specific DNA-binding protein complex which recognizes the core sequence 5'-CAC[GA]TG-3'. Antagonizes MYC transcriptional activity by competing for MAX and suppresses MYC dependent cell transformation. The sequence is that of Max dimerization protein 4 (MXD4) from Homo sapiens (Human).